Here is a 317-residue protein sequence, read N- to C-terminus: UV DNA damage endonuclease (317 aa).

The protein belongs to the uve1/UvsE family.

In terms of biological role, component in a DNA repair pathway. Removal of UV LIGHT damaged nucleotides. Recognizes pyrimidine dimers and cleave a phosphodiester bond immediately 5' to the lesion. This Bacillus cereus (strain B4264) protein is UV DNA damage endonuclease.